We begin with the raw amino-acid sequence, 120 residues long: NAD(P)H-quinone oxidoreductase subunit 3, chloroplastic (120 aa).

3 consecutive transmembrane segments (helical) span residues Tyr-9–Ser-29, Met-64–Met-84, and Leu-89–Val-109.

This sequence belongs to the complex I subunit 3 family. NDH is composed of at least 16 different subunits, 5 of which are encoded in the nucleus.

Its subcellular location is the plastid. The protein resides in the chloroplast thylakoid membrane. The enzyme catalyses a plastoquinone + NADH + (n+1) H(+)(in) = a plastoquinol + NAD(+) + n H(+)(out). It carries out the reaction a plastoquinone + NADPH + (n+1) H(+)(in) = a plastoquinol + NADP(+) + n H(+)(out). NDH shuttles electrons from NAD(P)H:plastoquinone, via FMN and iron-sulfur (Fe-S) centers, to quinones in the photosynthetic chain and possibly in a chloroplast respiratory chain. The immediate electron acceptor for the enzyme in this species is believed to be plastoquinone. Couples the redox reaction to proton translocation, and thus conserves the redox energy in a proton gradient. This chain is NAD(P)H-quinone oxidoreductase subunit 3, chloroplastic, found in Huperzia lucidula (Shining clubmoss).